The sequence spans 142 residues: Large ribosomal subunit protein uL13 (142 aa).

This sequence belongs to the universal ribosomal protein uL13 family. In terms of assembly, part of the 50S ribosomal subunit.

This protein is one of the early assembly proteins of the 50S ribosomal subunit, although it is not seen to bind rRNA by itself. It is important during the early stages of 50S assembly. The protein is Large ribosomal subunit protein uL13 of Pseudomonas paraeruginosa (strain DSM 24068 / PA7) (Pseudomonas aeruginosa (strain PA7)).